We begin with the raw amino-acid sequence, 364 residues long: Phosphoserine aminotransferase (364 aa).

Arginine 41 is an L-glutamate binding site. Residues 75–76 (AS), tryptophan 100, threonine 155, aspartate 175, and glutamine 198 contribute to the pyridoxal 5'-phosphate site. Lysine 199 bears the N6-(pyridoxal phosphate)lysine mark. Position 239–240 (239–240 (NT)) interacts with pyridoxal 5'-phosphate.

Belongs to the class-V pyridoxal-phosphate-dependent aminotransferase family. SerC subfamily. As to quaternary structure, homodimer. Pyridoxal 5'-phosphate serves as cofactor.

The protein resides in the cytoplasm. The catalysed reaction is O-phospho-L-serine + 2-oxoglutarate = 3-phosphooxypyruvate + L-glutamate. The enzyme catalyses 4-(phosphooxy)-L-threonine + 2-oxoglutarate = (R)-3-hydroxy-2-oxo-4-phosphooxybutanoate + L-glutamate. It functions in the pathway amino-acid biosynthesis; L-serine biosynthesis; L-serine from 3-phospho-D-glycerate: step 2/3. Its function is as follows. Catalyzes the reversible conversion of 3-phosphohydroxypyruvate to phosphoserine and of 3-hydroxy-2-oxo-4-phosphonooxybutanoate to phosphohydroxythreonine. The chain is Phosphoserine aminotransferase from Streptococcus thermophilus (strain CNRZ 1066).